Reading from the N-terminus, the 228-residue chain is Cytidylate kinase (228 aa).

10–18 is a binding site for ATP; sequence GPSGSGKGT.

This sequence belongs to the cytidylate kinase family. Type 1 subfamily.

The protein resides in the cytoplasm. The catalysed reaction is CMP + ATP = CDP + ADP. It catalyses the reaction dCMP + ATP = dCDP + ADP. This Acinetobacter baumannii (strain SDF) protein is Cytidylate kinase.